A 594-amino-acid polypeptide reads, in one-letter code: Nucleolar protein 56 (594 aa).

Residues K87, K230, and K240 each participate in a glycyl lysine isopeptide (Lys-Gly) (interchain with G-Cter in SUMO2) cross-link. Positions 292 to 410 constitute a Nop domain; the sequence is VAPSLSALIG…VEERLSFYET (119 aa). The residue at position 314 (S314) is a Phosphoserine. Position 359 is an omega-N-methylarginine (R359). Composition is skewed to low complexity over residues 458–469 and 488–504; these read ALASSENSSSTP and QEVP…ISFS. The segment at 458–594 is disordered; sequence ALASSENSSS…KKFHKASQED (137 aa). 2 positions are modified to phosphoserine: S466 and S467. The residue at position 468 (T468) is a Phosphothreonine. A phosphoserine mark is found at S511, S519, S520, and S537. Residue K540 forms a Glycyl lysine isopeptide (Lys-Gly) (interchain with G-Cter in SUMO2) linkage. Position 561 is an N6-acetyllysine (K561). Position 563 is a phosphoserine (S563). Residue K564 forms a Glycyl lysine isopeptide (Lys-Gly) (interchain with G-Cter in SUMO2) linkage. S569, S570, S579, and S581 each carry phosphoserine. The span at 580-594 shows a compositional bias: basic residues; it reads SSKKKKKFHKASQED.

The protein belongs to the NOP5/NOP56 family. In terms of assembly, part of a large pre-ribosomal ribonucleoprotein (RNP) complex, that consists of at least 62 ribosomal proteins, 45 nonribosomal proteins and both pre-rRNA and mature rRNA species. Within this complex directly interacts with TCOF1 in an RNA-independent manner. Core component of box C/D small nucleolar ribonucleoprotein (snoRNP) particles; the core proteins SNU13, NOP56, NOP58 and FBL or FBLL1 assemble stepwise onto the snoRNA. Interacts with NOP1 and NOP58. Interacts with NUFIP1, RUVBL1 and RUVBL2; RUVBL1:RUVBL2 seem to bridge the association of NOP56 with NUFIP1. Part of the small subunit (SSU) processome, composed of more than 70 proteins and the RNA chaperone small nucleolar RNA (snoRNA) U3. Interacts with NOP2 and FBL.

It localises to the nucleus. Its subcellular location is the nucleolus. The protein resides in the cytoplasm. The protein localises to the nucleoplasm. Its function is as follows. Involved in the early to middle stages of 60S ribosomal subunit biogenesis. Required for the biogenesis of box C/D snoRNAs such U3, U8 and U14 snoRNAs. Part of the small subunit (SSU) processome, first precursor of the small eukaryotic ribosomal subunit. During the assembly of the SSU processome in the nucleolus, many ribosome biogenesis factors, an RNA chaperone and ribosomal proteins associate with the nascent pre-rRNA and work in concert to generate RNA folding, modifications, rearrangements and cleavage as well as targeted degradation of pre-ribosomal RNA by the RNA exosome. Core component of box C/D small nucleolar ribonucleoprotein (snoRNP) complexes that function in methylation of multiple sites on ribosomal RNAs (rRNAs) and messenger RNAs (mRNAs). The sequence is that of Nucleolar protein 56 from Homo sapiens (Human).